Here is a 1189-residue protein sequence, read N- to C-terminus: Lysine-specific demethylase hairless (1189 aa).

Disordered stretches follow at residues 1–40 (MESTPSFLKGTPTWEKTAPENGIVRQEPGSPPRDGLHHGP), 236–257 (HLQRAGEAERPSLHQRDGEMGA), 349–377 (EGGASGASEPSEEVNKASGPRACPPSHHT), 414–480 (AGSP…LQDP), and 505–552 (GEGG…RLST). Residues 239–254 (RAGEAERPSLHQRDGE) are compositionally biased toward basic and acidic residues. Residues 457 to 469 (KDVDSGQHDEQKG) show a composition bias toward basic and acidic residues. Positions 566 to 570 (LCRLL) match the LXXLL motif 1 motif. The C6-type zinc-finger motif lies at 600–625 (CSRCHHGLFNTHWRCPRCSHRLCVAC). A disordered region spans residues 702 to 750 (GDAGQQKESTQKTPPTPQPSCNGDTHRTKSIKEETPDSAETPAEDRAGR). The span at 725–736 (DTHRTKSIKEET) shows a compositional bias: basic and acidic residues. The LXXLL motif 2 signature appears at 758-762 (LCELL). Residues 946-1157 (DTSRVENLAA…LSAQLCHQGP (212 aa)) enclose the JmjC domain. 3 residues coordinate Fe cation: Cys1007, Glu1009, and His1125.

It depends on Fe(2+) as a cofactor. In terms of tissue distribution, strongest expression of isoforms 1 and 2 is seen in the small intestine, weaker expression in brain and colon, and trace expression is found in liver, pancreas, spleen, thymus, stomach, salivary gland, appendix and trachea. Isoform 1 is always the most abundant. Isoform 1 is exclusively expressed at low levels in kidney and testis. Isoform 2 is exclusively expressed at high levels in the skin.

The protein resides in the nucleus. It carries out the reaction N(6),N(6)-dimethyl-L-lysyl(9)-[histone H3] + 2 2-oxoglutarate + 2 O2 = L-lysyl(9)-[histone H3] + 2 formaldehyde + 2 succinate + 2 CO2. Its function is as follows. Histone demethylase that specifically demethylates both mono- and dimethylated 'Lys-9' of histone H3. May act as a transcription regulator controlling hair biology (via targeting of collagens), neural activity, and cell cycle. The chain is Lysine-specific demethylase hairless (HR) from Homo sapiens (Human).